The primary structure comprises 373 residues: tRNA-specific 2-thiouridylase MnmA (373 aa).

ATP-binding positions include 12 to 19 (GMSGGVDS) and Met38. Residues 98-100 (NPD) are interaction with target base in tRNA. The active-site Nucleophile is the Cys103. A disulfide bridge links Cys103 with Cys200. Gly127 is an ATP binding site. The interval 150–152 (KDQ) is interaction with tRNA. Cys200 functions as the Cysteine persulfide intermediate in the catalytic mechanism. The segment at 312–313 (RY) is interaction with tRNA.

This sequence belongs to the MnmA/TRMU family.

The protein localises to the cytoplasm. The catalysed reaction is S-sulfanyl-L-cysteinyl-[protein] + uridine(34) in tRNA + AH2 + ATP = 2-thiouridine(34) in tRNA + L-cysteinyl-[protein] + A + AMP + diphosphate + H(+). Its function is as follows. Catalyzes the 2-thiolation of uridine at the wobble position (U34) of tRNA, leading to the formation of s(2)U34. This Streptococcus pneumoniae (strain Hungary19A-6) protein is tRNA-specific 2-thiouridylase MnmA.